A 120-amino-acid polypeptide reads, in one-letter code: MLRFTEEHEWLKLDGEIATVGITSHAAEQLGDLVFVELPKVGAVLTKGEAAAVVESVKAASDVYAPLDGEVTEINEAVVAAPETVNADPQGAGWLYRMRLKDPSAMEALMDEAAYAAFPK.

The Lipoyl-binding domain occupies 17 to 99; that stretch reads IATVGITSHA…QGAGWLYRMR (83 aa). At Lys58 the chain carries N6-lipoyllysine.

The protein belongs to the GcvH family. In terms of assembly, the glycine cleavage system is composed of four proteins: P, T, L and H. (R)-lipoate is required as a cofactor.

Functionally, the glycine cleavage system catalyzes the degradation of glycine. The H protein shuttles the methylamine group of glycine from the P protein to the T protein. The protein is Glycine cleavage system H protein of Methylobacterium nodulans (strain LMG 21967 / CNCM I-2342 / ORS 2060).